An 824-amino-acid chain; its full sequence is Glycophorin-binding protein 130 (824 aa).

Residues 84–88 (RILAE) carry the PEXEL motif motif. 11 disordered regions span residues 97–236 (EKTT…GQIM), 258–291 (NTDP…EYAS), 310–334 (DPND…PEGQ), 358–384 (NTDP…PEGQ), 408–431 (NTDP…SDPE), 457–482 (NTDP…DPEG), 507–532 (NTDP…DPEG), 559–582 (DPND…DPEG), 659–683 (DPND…PEGQ), 711–733 (NDEV…PEGQ), and 759–783 (DPND…PEGQ). Composition is skewed to basic and acidic residues over residues 117 to 140 (TKKD…SEKQ) and 174 to 198 (KKEE…EPKA). Residues 200–228 (KVSQKPSTSTRSNNEVKIRAASNQETLTS) are compositionally biased toward polar residues. 12 GBP repeats span residues 226–275 (LTSA…NKED), 276–325 (LTSA…NKED), 326–375 (LTSA…NKED), 376–424 (LTSA…DNKE), 425–474 (LTSS…NKED), 475–524 (LTSA…NKED), 525–574 (LTSA…NKED), 575–624 (LTSA…NKEE), 625–674 (LTSS…NKED), 675–724 (LTSA…NKED), 725–774 (LTSA…NKED), and 775–824 (LTSA…NNEA). Composition is skewed to basic and acidic residues over residues 264–276 (EVER…KEDL), 314–326 (DVER…KEDL), 364–376 (EVER…KEDL), 414–426 (EVER…KELT), 463–475 (EVER…KEDL), 513–525 (EVER…KEDL), 563–575 (EVER…KEDL), 663–675 (EVER…KEDL), 713–725 (EVER…KEDL), and 763–775 (DVER…KEDL).

In terms of assembly, interacts with host glycophorin.

The protein localises to the secreted. Its subcellular location is the cell surface. It is found in the host cytoplasm. Functionally, involved in merozoite invasion of host erythrocytes. The polypeptide is Glycophorin-binding protein 130 (Plasmodium falciparum (isolate 3D7)).